We begin with the raw amino-acid sequence, 39 residues long: KELNSNHDGADETSEKEQQEAIEHIDEVQNEIDRLNETA.

Residues lysine 1–alanine 39 are disordered.

The protein to human SET/PHAPII protein. In terms of assembly, oligomer.

The protein resides in the cytoplasm. Its function is as follows. Has a role in the physiological regulation of fucosylation processes. The protein is Fuctinin-3 of Rattus norvegicus (Rat).